The following is a 58-amino-acid chain: UPF0391 membrane protein Gbem_0127 (58 aa).

Transmembrane regions (helical) follow at residues 4 to 24 (WALI…GGIA) and 33 to 53 (ILFY…LLAG).

It belongs to the UPF0391 family.

The protein resides in the cell membrane. This is UPF0391 membrane protein Gbem_0127 from Citrifermentans bemidjiense (strain ATCC BAA-1014 / DSM 16622 / JCM 12645 / Bem) (Geobacter bemidjiensis).